The chain runs to 63 residues: Sperm protamine P1 (63 aa).

The segment at 1 to 63 is disordered; the sequence is MARYRRHSRS…RYSRRGRRRY (63 aa).

It belongs to the protamine P1 family. As to expression, testis.

The protein resides in the nucleus. Its subcellular location is the chromosome. In terms of biological role, protamines substitute for histones in the chromatin of sperm during the haploid phase of spermatogenesis. They compact sperm DNA into a highly condensed, stable and inactive complex. The polypeptide is Sperm protamine P1 (PRM1) (Phascogale tapoatafa (Common wambenger)).